We begin with the raw amino-acid sequence, 600 residues long: DNA primase (600 aa).

The CHC2-type zinc finger occupies Cys-38–Cys-62. A Toprim domain is found at Lys-253–Pro-333. The Mg(2+) site is built by Glu-259, Asp-304, and Asp-306.

It belongs to the DnaG primase family. Monomer. Interacts with DnaB. The cofactor is Zn(2+). Mg(2+) is required as a cofactor.

The enzyme catalyses ssDNA + n NTP = ssDNA/pppN(pN)n-1 hybrid + (n-1) diphosphate.. Its function is as follows. RNA polymerase that catalyzes the synthesis of short RNA molecules used as primers for DNA polymerase during DNA replication. This chain is DNA primase, found in Chlamydia muridarum (strain MoPn / Nigg).